A 467-amino-acid chain; its full sequence is Ribulose bisphosphate carboxylase large chain (467 aa).

The propeptide occupies 1–2 (MS). At proline 3 the chain carries N-acetylproline. Lysine 14 carries the N6,N6,N6-trimethyllysine modification. The substrate site is built by asparagine 123 and threonine 173. Residue lysine 175 is the Proton acceptor of the active site. Lysine 177 provides a ligand contact to substrate. Mg(2+) contacts are provided by lysine 201, aspartate 203, and glutamate 204. Lysine 201 bears the N6-carboxylysine mark. The Proton acceptor role is filled by histidine 294. Substrate-binding residues include arginine 295, histidine 327, and serine 379.

Belongs to the RuBisCO large chain family. Type I subfamily. Heterohexadecamer of 8 large chains and 8 small chains; disulfide-linked. The disulfide link is formed within the large subunit homodimers. Mg(2+) serves as cofactor. Post-translationally, the disulfide bond which can form in the large chain dimeric partners within the hexadecamer appears to be associated with oxidative stress and protein turnover.

It localises to the plastid. The protein localises to the chloroplast. The enzyme catalyses 2 (2R)-3-phosphoglycerate + 2 H(+) = D-ribulose 1,5-bisphosphate + CO2 + H2O. It carries out the reaction D-ribulose 1,5-bisphosphate + O2 = 2-phosphoglycolate + (2R)-3-phosphoglycerate + 2 H(+). In terms of biological role, ruBisCO catalyzes two reactions: the carboxylation of D-ribulose 1,5-bisphosphate, the primary event in carbon dioxide fixation, as well as the oxidative fragmentation of the pentose substrate in the photorespiration process. Both reactions occur simultaneously and in competition at the same active site. The chain is Ribulose bisphosphate carboxylase large chain from Calamus usitatus (Palm tree).